Reading from the N-terminus, the 375-residue chain is Alanine racemase (375 aa).

Lysine 45 functions as the Proton acceptor; specific for D-alanine in the catalytic mechanism. N6-(pyridoxal phosphate)lysine is present on lysine 45. Arginine 141 serves as a coordination point for substrate. Tyrosine 270 acts as the Proton acceptor; specific for L-alanine in catalysis. Residue methionine 318 participates in substrate binding.

This sequence belongs to the alanine racemase family. Pyridoxal 5'-phosphate serves as cofactor.

It carries out the reaction L-alanine = D-alanine. Its pathway is amino-acid biosynthesis; D-alanine biosynthesis; D-alanine from L-alanine: step 1/1. Catalyzes the interconversion of L-alanine and D-alanine. May also act on other amino acids. The sequence is that of Alanine racemase (alr) from Pseudoalteromonas atlantica (strain T6c / ATCC BAA-1087).